The primary structure comprises 687 residues: Polyphosphate kinase (687 aa).

N45 contributes to the ATP binding site. Residues R375 and R405 each contribute to the Mg(2+) site. The active-site Phosphohistidine intermediate is the H435. The ATP site is built by Y472, R568, and H596.

This sequence belongs to the polyphosphate kinase 1 (PPK1) family. It depends on Mg(2+) as a cofactor. In terms of processing, an intermediate of this reaction is the autophosphorylated ppk in which a phosphate is covalently linked to a histidine residue through a N-P bond.

The catalysed reaction is [phosphate](n) + ATP = [phosphate](n+1) + ADP. In terms of biological role, catalyzes the reversible transfer of the terminal phosphate of ATP to form a long-chain polyphosphate (polyP). The protein is Polyphosphate kinase of Burkholderia lata (strain ATCC 17760 / DSM 23089 / LMG 22485 / NCIMB 9086 / R18194 / 383).